Consider the following 351-residue polypeptide: Adenine deaminase (351 aa).

Zn(2+)-binding residues include His19, His21, and His208. Catalysis depends on Glu211, which acts as the Proton donor. Position 288 (Asp288) interacts with Zn(2+). Asp289 provides a ligand contact to substrate.

This sequence belongs to the metallo-dependent hydrolases superfamily. Adenosine and AMP deaminases family. Adenine deaminase type 2 subfamily. Requires Zn(2+) as cofactor.

Its subcellular location is the cytoplasm. It localises to the nucleus. It catalyses the reaction adenine + H2O + H(+) = hypoxanthine + NH4(+). In terms of biological role, catalyzes the hydrolytic deamination of adenine to hypoxanthine. Plays an important role in the purine salvage pathway and in nitrogen catabolism. The sequence is that of Adenine deaminase (aah1) from Aspergillus oryzae (strain ATCC 42149 / RIB 40) (Yellow koji mold).